The chain runs to 222 residues: S-crystallin SL20-1 (222 aa).

Residues 2 to 80 (PNYTLYYFNG…YLARENGYYG (79 aa)) enclose the GST N-terminal domain. Residues 82 to 222 (NNMDMFRIDY…YLKKRNNTNW (141 aa)) form the GST C-terminal domain.

The protein belongs to the GST superfamily. Lens.

S-crystallins are structural components of squids and octopi eye lens. Contains relatively little if any GST activity. This chain is S-crystallin SL20-1, found in Nototodarus sloanii (Wellington flying squid).